The primary structure comprises 344 residues: tRNA N6-adenosine threonylcarbamoyltransferase (344 aa).

Fe cation is bound by residues histidine 111 and histidine 115. Substrate contacts are provided by residues 133–137 (LVSGG), aspartate 166, glycine 179, and asparagine 283. Aspartate 311 provides a ligand contact to Fe cation.

It belongs to the KAE1 / TsaD family. It depends on Fe(2+) as a cofactor.

Its subcellular location is the cytoplasm. The catalysed reaction is L-threonylcarbamoyladenylate + adenosine(37) in tRNA = N(6)-L-threonylcarbamoyladenosine(37) in tRNA + AMP + H(+). In terms of biological role, required for the formation of a threonylcarbamoyl group on adenosine at position 37 (t(6)A37) in tRNAs that read codons beginning with adenine. Is involved in the transfer of the threonylcarbamoyl moiety of threonylcarbamoyl-AMP (TC-AMP) to the N6 group of A37, together with TsaE and TsaB. TsaD likely plays a direct catalytic role in this reaction. The protein is tRNA N6-adenosine threonylcarbamoyltransferase of Orientia tsutsugamushi (strain Boryong) (Rickettsia tsutsugamushi).